The sequence spans 183 residues: Ribosome maturation factor RimM (183 aa).

Residues 103 to 183 (EEGDYYWKDL…SIEVDWDPGF (81 aa)) enclose the PRC barrel domain.

It belongs to the RimM family. In terms of assembly, binds ribosomal protein uS19.

It is found in the cytoplasm. Its function is as follows. An accessory protein needed during the final step in the assembly of 30S ribosomal subunit, possibly for assembly of the head region. Essential for efficient processing of 16S rRNA. May be needed both before and after RbfA during the maturation of 16S rRNA. It has affinity for free ribosomal 30S subunits but not for 70S ribosomes. The polypeptide is Ribosome maturation factor RimM (Escherichia coli O157:H7 (strain EC4115 / EHEC)).